A 98-amino-acid chain; its full sequence is NADH-ubiquinone oxidoreductase chain 4L (98 aa).

3 consecutive transmembrane segments (helical) span residues 1 to 21 (MSLTYMNMFMAFTISLLGLLL), 29 to 49 (SLLCLEGMMLSLFVMMTMVIL), and 61 to 81 (IILLVFAACEAALGLSLLVMV).

Belongs to the complex I subunit 4L family. As to quaternary structure, core subunit of respiratory chain NADH dehydrogenase (Complex I) which is composed of 45 different subunits.

It localises to the mitochondrion inner membrane. It catalyses the reaction a ubiquinone + NADH + 5 H(+)(in) = a ubiquinol + NAD(+) + 4 H(+)(out). Its function is as follows. Core subunit of the mitochondrial membrane respiratory chain NADH dehydrogenase (Complex I) which catalyzes electron transfer from NADH through the respiratory chain, using ubiquinone as an electron acceptor. Part of the enzyme membrane arm which is embedded in the lipid bilayer and involved in proton translocation. This chain is NADH-ubiquinone oxidoreductase chain 4L (MT-ND4L), found in Platyrrhinus helleri (Heller's broad-nosed bat).